Here is a 275-residue protein sequence, read N- to C-terminus: MKARFDKIYKDIVDTIAEKGIWSEGNVRTKYADGTAAHYKSYIGYQFRLDNSDDEAHLITSRFAPSKAPIRELYWIWILQSNNVDVLNELGCKFWDEWKMQDGTIGKAYGYQIAQETFGQKSQLHYVINELKKNPNSRRIMTEIWIPNELSEMALTPCVHLTQWSVIGNKLYLEVRQRSCDVALGLVANVFQYSVLHKLVALECGLEPAEIIWNIHNMHIYDRHYDKLIEQVNRETFEPAKIKINNFKSIFDFKPDDIEIIDYKYGEKVSYEVAI.

138-139 provides a ligand contact to dUMP; that stretch reads RR. C158 (nucleophile) is an active-site residue. DUMP-binding positions include 178 to 181, N189, and 219 to 221; these read RSCD and HIY. D181 lines the (6R)-5,10-methylene-5,6,7,8-tetrahydrofolate pocket. Position 274 (A274) interacts with (6R)-5,10-methylene-5,6,7,8-tetrahydrofolate.

The protein belongs to the thymidylate synthase family. Bacterial-type ThyA subfamily. As to quaternary structure, homodimer.

It localises to the cytoplasm. It catalyses the reaction dUMP + (6R)-5,10-methylene-5,6,7,8-tetrahydrofolate = 7,8-dihydrofolate + dTMP. It functions in the pathway pyrimidine metabolism; dTTP biosynthesis. Catalyzes the reductive methylation of 2'-deoxyuridine-5'-monophosphate (dUMP) to 2'-deoxythymidine-5'-monophosphate (dTMP) while utilizing 5,10-methylenetetrahydrofolate (mTHF) as the methyl donor and reductant in the reaction, yielding dihydrofolate (DHF) as a by-product. This enzymatic reaction provides an intracellular de novo source of dTMP, an essential precursor for DNA biosynthesis. This Fusobacterium nucleatum subsp. nucleatum (strain ATCC 25586 / DSM 15643 / BCRC 10681 / CIP 101130 / JCM 8532 / KCTC 2640 / LMG 13131 / VPI 4355) protein is Thymidylate synthase.